A 41-amino-acid chain; its full sequence is Probable cinnamyl alcohol dehydrogenase 2 (41 aa).

This sequence belongs to the zinc-containing alcohol dehydrogenase family. It depends on Zn(2+) as a cofactor.

The catalysed reaction is (E)-cinnamyl alcohol + NADP(+) = (E)-cinnamaldehyde + NADPH + H(+). It carries out the reaction (E)-coniferol + NADP(+) = (E)-coniferaldehyde + NADPH + H(+). It catalyses the reaction (E)-sinapyl alcohol + NADP(+) = (E)-sinapaldehyde + NADPH + H(+). The enzyme catalyses (E)-4-coumaroyl alcohol + NADP(+) = (E)-4-coumaraldehyde + NADPH + H(+). The catalysed reaction is (E)-caffeyl alcohol + NADP(+) = (E)-caffeyl aldehyde + NADPH + H(+). Its pathway is aromatic compound metabolism; phenylpropanoid biosynthesis. In terms of biological role, involved in lignin biosynthesis. Catalyzes the final step specific for the production of lignin monomers, like coniferyl alcohol, sinapyl alcohol and 4-coumaryl alcohol. The chain is Probable cinnamyl alcohol dehydrogenase 2 from Pseudotsuga menziesii (Douglas-fir).